Reading from the N-terminus, the 142-residue chain is Large ribosomal subunit protein bL17 (142 aa).

Belongs to the bacterial ribosomal protein bL17 family. Part of the 50S ribosomal subunit. Contacts protein L32.

In Brucella canis (strain ATCC 23365 / NCTC 10854 / RM-666), this protein is Large ribosomal subunit protein bL17.